The chain runs to 166 residues: Ribosome-binding factor A (166 aa).

Residues 122–166 are disordered; that stretch reads HVADETDVEDSTDHEDDVTNSEDETKHVDIDTDSEEGTNTDGKAQ. Over residues 126-143 the composition is skewed to acidic residues; sequence ETDVEDSTDHEDDVTNSE.

Belongs to the RbfA family. As to quaternary structure, monomer. Binds 30S ribosomal subunits, but not 50S ribosomal subunits or 70S ribosomes.

It localises to the cytoplasm. Functionally, one of several proteins that assist in the late maturation steps of the functional core of the 30S ribosomal subunit. Associates with free 30S ribosomal subunits (but not with 30S subunits that are part of 70S ribosomes or polysomes). Required for efficient processing of 16S rRNA. May interact with the 5'-terminal helix region of 16S rRNA. This Pseudoalteromonas translucida (strain TAC 125) protein is Ribosome-binding factor A.